Consider the following 1313-residue polypeptide: Angiotensin-converting enzyme (1313 aa).

The first 35 residues, 1–35 (MGAASGQRGRWPLSPPLLMLSLLLLLLLPPSPAPA), serve as a signal peptide directing secretion. Topologically, residues 36–1265 (LDPGLQPGNF…LEPQQARVGQ (1230 aa)) are extracellular. Residues Asn44, Asn60, Asn80, Asn117, Asn152, and Asn166 are each glycosylated (N-linked (GlcNAc...) asparagine). 2 Peptidase M2 domains span residues 46-630 (SADE…LGWP) and 649-1228 (ETDE…LGWP). A disulfide bridge links Cys163 with Cys171. Tyr237 provides a ligand contact to chloride. Asn324 carries N-linked (GlcNAc...) asparagine glycosylation. Residues Cys365 and Cys383 are joined by a disulfide bond. Residue His396 coordinates Zn(2+). Glu397 (proton acceptor 1) is an active-site residue. The Zn(2+) site is built by His400 and Glu424. Asn515 carries an N-linked (GlcNAc...) asparagine glycan. His526 acts as the Proton donor 1 in catalysis. Arg535 provides a ligand contact to chloride. A disulfide bridge connects residues Cys551 and Cys563. 4 N-linked (GlcNAc...) asparagine glycosylation sites follow: Asn683, Asn701, Asn720, and Asn766. A disulfide bridge links Cys763 with Cys769. Residues Arg797 and Tyr835 each coordinate chloride. An N-linked (GlcNAc...) asparagine glycan is attached at Asn948. Cys963 and Cys981 are disulfide-bonded. His994 lines the Zn(2+) pocket. Glu995 (proton acceptor 2) is an active-site residue. Residues His998 and Glu1022 each coordinate Zn(2+). Residues Trp1096 and Arg1100 each contribute to the chloride site. His1124 functions as the Proton donor 2 in the catalytic mechanism. Arg1133 serves as a coordination point for chloride. Cys1149 and Cys1161 are joined by a disulfide. Asn1197 carries N-linked (GlcNAc...) asparagine glycosylation. The interval 1221–1262 (HGETLGWPEYTWTPNTARAEGSLPESSRVNFLGMYLEPQQAR) is juxtamembrane stalk. A helical membrane pass occupies residues 1266–1282 (WVLLFLGVALLVATVGL). At 1283–1313 (AHRLYNIHNHHSLRRPHRGPQFGSEVELRHS) the chain is on the cytoplasmic side. Residue Ser1306 is modified to Phosphoserine.

Belongs to the peptidase M2 family. Monomer and homodimer; homodimerizes following binding to an inhibitor. Interacts with calmodulin (CALM1, CALM2 or CALM3); interaction takes place in the cytoplasmic region and regulates phosphorylation and proteolytic cleavage. Requires Zn(2+) as cofactor. Chloride serves as cofactor. Produced following proteolytic cleavage by secretase enzymes that cleave the transmembrane form in the juxtamembrane stalk region upstream of the transmembrane region. Cleavage can take place at different sites of the juxtamembrane stalk region. In terms of processing, phosphorylated by CK2 on Ser-1306; which allows membrane retention. Phosphorylated on tyrosine residues on its extracellular part, promoting cleavage by secretase enzymes and formation of the soluble form (Angiotensin-converting enzyme, soluble form). As to expression, expressed in brain, kidney, lung, skeletal muscle and heart. In terms of tissue distribution, testis-specific isoform is expressed in spermatocytes, adult testis.

The protein localises to the cell membrane. The protein resides in the cytoplasm. It localises to the secreted. The enzyme catalyses Release of a C-terminal dipeptide, oligopeptide-|-Xaa-Yaa, when Xaa is not Pro, and Yaa is neither Asp nor Glu. Thus, conversion of angiotensin I to angiotensin II, with increase in vasoconstrictor activity, but no action on angiotensin II.. It carries out the reaction angiotensin I + H2O = L-histidyl-L-leucine + angiotensin II. It catalyses the reaction bradykinin + H2O = L-Phe-L-Arg + bradykinin(1-7). The catalysed reaction is substance P + H2O = substance P(1-9) + L-Leu-L-Met-NH2. The enzyme catalyses substance P + H2O = substance P(1-8) + Gly-L-Leu-L-Met-NH2. It carries out the reaction substance P + H2O = L-Phe-L-Phe-Gly-L-Leu-L-Met-NH2 + substance P(1-6). It catalyses the reaction neurotensin + H2O = neurotensin(1-11) + L-isoleucyl-L-leucine. The catalysed reaction is goralatide + H2O = N-acetyl-L-seryl-L-aspartate + L-lysyl-L-proline. The enzyme catalyses Met-enkephalin + H2O = L-phenylalanyl-L-methionine + L-tyrosylglycylglycine. It carries out the reaction Leu-enkephalin + H2O = L-tyrosylglycylglycine + L-phenylalanyl-L-leucine. It catalyses the reaction Met-enkephalin-Arg-Phe + H2O = L-arginyl-L-phenylalanine + Met-enkephalin. The dipeptidyl carboxypeptidase activity is strongly activated by chloride. The dipeptidyl carboxypeptidase activity is specifically inhibited by lisinopril, captopril and enalaprilat. With respect to regulation, strongly inhibited by lisinopril and captopril. Dipeptidyl carboxypeptidase that removes dipeptides from the C-terminus of a variety of circulating hormones, such as angiotensin I, bradykinin or enkephalins, thereby playing a key role in the regulation of blood pressure, electrolyte homeostasis or synaptic plasticity. Composed of two similar catalytic domains, each possessing a functional active site, with different selectivity for substrates. Plays a major role in the angiotensin-renin system that regulates blood pressure and sodium retention by the kidney by converting angiotensin I to angiotensin II, resulting in an increase of the vasoconstrictor activity of angiotensin. Also able to inactivate bradykinin, a potent vasodilator, and therefore enhance the blood pressure response. Acts as a regulator of synaptic transmission by mediating cleavage of neuropeptide hormones, such as substance P, neurotensin or enkephalins. Catalyzes degradation of different enkephalin neuropeptides (Met-enkephalin, Leu-enkephalin, Met-enkephalin-Arg-Phe and possibly Met-enkephalin-Arg-Gly-Leu). Acts as a regulator of synaptic plasticity in the nucleus accumbens of the brain by mediating cleavage of Met-enkephalin-Arg-Phe, a strong ligand of Mu-type opioid receptor OPRM1, into Met-enkephalin. Met-enkephalin-Arg-Phe cleavage by ACE decreases activation of OPRM1, leading to long-term synaptic potentiation of glutamate release. Also acts as a regulator of hematopoietic stem cell differentiation by mediating degradation of hemoregulatory peptide N-acetyl-SDKP (AcSDKP). Acts as a regulator of cannabinoid signaling pathway by mediating degradation of hemopressin, an antagonist peptide of the cannabinoid receptor CNR1. Involved in amyloid-beta metabolism by catalyzing degradation of Amyloid-beta protein 40 and Amyloid-beta protein 42 peptides, thereby preventing plaque formation. Catalyzes cleavage of cholecystokinin (maturation of Cholecystokinin-8 and Cholecystokinin-5) and Gonadoliberin-1 (both maturation and degradation) hormones. Degradation of hemoregulatory peptide N-acetyl-SDKP (AcSDKP) and amyloid-beta proteins is mediated by the N-terminal catalytic domain, while angiotensin I and cholecystokinin cleavage is mediated by the C-terminal catalytic region. Its function is as follows. Soluble form that is released in blood plasma and other body fluids following proteolytic cleavage in the juxtamembrane stalk region. Functionally, isoform produced by alternative promoter usage that is specifically expressed in spermatocytes and adult testis, and which is required for male fertility. In contrast to somatic isoforms, only contains one catalytic domain. Acts as a dipeptidyl carboxypeptidase that removes dipeptides from the C-terminus of substrates. The identity of substrates that are needed for male fertility is unknown. May also have a glycosidase activity which releases GPI-anchored proteins from the membrane by cleaving the mannose linkage in the GPI moiety. The GPIase activity was reported to be essential for the egg-binding ability of the sperm. This activity is however unclear and has been challenged by other groups, suggesting that it may be indirect. The sequence is that of Angiotensin-converting enzyme from Rattus norvegicus (Rat).